Reading from the N-terminus, the 539-residue chain is Sporozoite-associated protein (539 aa).

N-linked (GlcNAc...) asparagine glycosylation is found at Asn31, Asn90, Asn102, Asn149, and Asn167. The segment at 126–153 is disordered; that stretch reads LTQSPPPAAAPQSPSPRAILSPRNVSKT. Low complexity predominate over residues 192–215; that stretch reads VVAEKSNTPTTPKTTPNGKWTGKN. The disordered stretch occupies residues 192–231; it reads VVAEKSNTPTTPKTTPNGKWTGKNANATIETSNTDHTPPS. Positions 216–228 are enriched in polar residues; the sequence is ANATIETSNTDHT. 3 N-linked (GlcNAc...) asparagine glycosylation sites follow: Asn217, Asn271, and Asn288. The interval 303 to 355 is disordered; sequence TLISRAQDDKPGTKGGSDETSSSTAASNERQPMFPNDNDDDDIDQTYCPGVES. Residues 320–332 are compositionally biased toward polar residues; the sequence is DETSSSTAASNER. Residues Asn427 and Asn503 are each glycosylated (N-linked (GlcNAc...) asparagine).

As to expression, saliva (at protein level). Female salivary gland. Female midgut.

The protein resides in the secreted. Functionally, binds heparan sulfate proteoglycans present on the mammalian cell surface. Modulates host immune responses at the site of inoculation via decreasing the expression of TNF-alpha/TNF, IL-1beta/IL1B, IFN-gamma/IFNG, IL4, MMP9, TGF-beta and ICAM1. (Microbial infection) Interacts with the surface of Plasmodium berghei sporozoites. Promotes Plasmodium berghei transmission to the mouse host. Does not affect Plasmodium berghei sporozoite viability. Its function is as follows. (Microbial infection) Interacts with the surface of Plasmodium falciparum sporozoites. This chain is Sporozoite-associated protein, found in Anopheles gambiae (African malaria mosquito).